Reading from the N-terminus, the 77-residue chain is Acyl carrier protein (77 aa).

The 74-residue stretch at S4–N77 folds into the Carrier domain. S40 carries the O-(pantetheine 4'-phosphoryl)serine modification.

The protein belongs to the acyl carrier protein (ACP) family. Post-translationally, 4'-phosphopantetheine is transferred from CoA to a specific serine of apo-ACP by AcpS. This modification is essential for activity because fatty acids are bound in thioester linkage to the sulfhydryl of the prosthetic group.

It localises to the cytoplasm. The protein operates within lipid metabolism; fatty acid biosynthesis. In terms of biological role, carrier of the growing fatty acid chain in fatty acid biosynthesis. This Anabaena variabilis protein is Acyl carrier protein.